Reading from the N-terminus, the 316-residue chain is Olfactory receptor 5AP2 (316 aa).

Residues 1-34 are Extracellular-facing; it reads MRLMKEVRGRNQTEVTEFLLLGLSDNPDLQGVLF. Asn11 is a glycosylation site (N-linked (GlcNAc...) asparagine). The helical transmembrane segment at 35 to 55 threads the bilayer; sequence ALFLLIYMANMVGNLGMIVLI. Lys56 is a topological domain (cytoplasmic). The chain crosses the membrane as a helical span at residues 57–77; sequence IDLCLHTPMYFFLSSLSFVDA. Residues 78–104 are Extracellular-facing; that stretch reads SYSSSVTPKMLVNLMAENKAISFHGCA. A disulfide bridge connects residues Cys103 and Cys195. Residues 105–125 form a helical membrane-spanning segment; sequence AQFYFFGSFLGTECFLLAMMA. The Cytoplasmic segment spans residues 126-135; that stretch reads YDRYAAIWNP. A helical membrane pass occupies residues 136–156; it reads LLYPVLVSGRICFLLIATSFL. The Extracellular segment spans residues 157–210; sequence AGCGNAAIHTGMTFRLSFCGSNRINHFYCDTPPLLKLSCSDTHFNGIVIMAFSS. A helical membrane pass occupies residues 211–231; sequence FIVISCVMIVLISYLCIFIAV. Residues 232–245 are Cytoplasmic-facing; sequence LKMPSLEGRHKAFS. A helical transmembrane segment spans residues 246-266; that stretch reads TCASYLMAVTIFFGTILFMYL. The Extracellular portion of the chain corresponds to 267–278; the sequence is RPTSSYSMEQDK. Residues 279–299 form a helical membrane-spanning segment; it reads VVSVFYTVIIPVLNPLIYSLK. The Cytoplasmic portion of the chain corresponds to 300–316; the sequence is NKDVKKALKKILWKHIL.

It belongs to the G-protein coupled receptor 1 family.

The protein localises to the cell membrane. Odorant receptor. The chain is Olfactory receptor 5AP2 from Homo sapiens (Human).